The chain runs to 347 residues: MSAPARVLVVDDSATMRGLITAVLSSDPEVNVIGQAGDALEAREAIKRLNPDVLTLDIEMPNMNGLDFLEKIMTLRPMPVIMVSTMTHRGAEATLAALEIGAFDCVGKPAPGELRPFGDLAEKVKAAARTQRQYSQPVVAVAPPPSVADFRVGRKIVAIGSSTGGVEALIAVLQKFPANCPPTVITQHMPPTFTKSFAERLNRLCAPVVQEATDGARLEIGKIYLAPGGERHLQVSGASAPCCRLIDRAPVNGHRPSVDVLFDSVAELAGRNAVGVILTGMGRDGAAGLLKMRHAGARTLGQNEKTCVVYGMPRVAHELGAVEQQLPLSAIGEEILKMTAARKEGTE.

Residues 6–123 (RVLVVDDSAT…LRPFGDLAEK (118 aa)) form the Response regulatory domain. The residue at position 57 (Asp57) is a 4-aspartylphosphate. Residues 150-342 (FRVGRKIVAI…EEILKMTAAR (193 aa)) form the CheB-type methylesterase domain. Catalysis depends on residues Ser162, His188, and Asp284.

This sequence belongs to the CheB family. In terms of processing, phosphorylated by CheA. Phosphorylation of the N-terminal regulatory domain activates the methylesterase activity.

It is found in the cytoplasm. It catalyses the reaction [protein]-L-glutamate 5-O-methyl ester + H2O = L-glutamyl-[protein] + methanol + H(+). It carries out the reaction L-glutaminyl-[protein] + H2O = L-glutamyl-[protein] + NH4(+). Its function is as follows. Involved in chemotaxis. Part of a chemotaxis signal transduction system that modulates chemotaxis in response to various stimuli. Catalyzes the demethylation of specific methylglutamate residues introduced into the chemoreceptors (methyl-accepting chemotaxis proteins or MCP) by CheR. Also mediates the irreversible deamidation of specific glutamine residues to glutamic acid. This Rhizobium johnstonii (strain DSM 114642 / LMG 32736 / 3841) (Rhizobium leguminosarum bv. viciae) protein is Protein-glutamate methylesterase/protein-glutamine glutaminase 1.